The primary structure comprises 332 residues: RNA polymerase principal sigma factor HrdD (332 aa).

The tract at residues 1 to 25 is disordered; that stretch reads MATRAVARRQSATGETADSASSVRA. Over residues 10–22 the composition is skewed to polar residues; it reads QSATGETADSASS. The Polymerase core binding motif lies at 124–137; it reads DLIQEGNAGLVRAV. Positions 294 to 313 form a DNA-binding region, H-T-H motif; sequence LTEVGKEHGLTRERIRQIEK.

This sequence belongs to the sigma-70 factor family.

In terms of biological role, sigma factors are initiation factors that promote the attachment of RNA polymerase to specific initiation sites and are then released. This chain is RNA polymerase principal sigma factor HrdD (hrdD), found in Streptomyces viridifaciens.